The chain runs to 147 residues: Hemoglobin subunit beta-2 (147 aa).

One can recognise a Globin domain in the interval 3–147; it reads EWTDSERAII…VVSALGRQYH (145 aa). Residues His64 and His93 each coordinate heme b.

The protein belongs to the globin family. In terms of assembly, hb 3 is a heterotetramer of two alpha-2 and two beta-2 chains. In terms of tissue distribution, red blood cells.

Its function is as follows. Involved in oxygen transport from gills to the various peripheral tissues. In Boreogadus saida (Polar cod), this protein is Hemoglobin subunit beta-2 (hbb2).